A 549-amino-acid polypeptide reads, in one-letter code: Glucose-6-phosphate isomerase (549 aa).

Glu-355 serves as the catalytic Proton donor. Catalysis depends on residues His-387 and Lys-515.

This sequence belongs to the GPI family.

The protein localises to the cytoplasm. The enzyme catalyses alpha-D-glucose 6-phosphate = beta-D-fructose 6-phosphate. It participates in carbohydrate biosynthesis; gluconeogenesis. Its pathway is carbohydrate degradation; glycolysis; D-glyceraldehyde 3-phosphate and glycerone phosphate from D-glucose: step 2/4. Its function is as follows. Catalyzes the reversible isomerization of glucose-6-phosphate to fructose-6-phosphate. This chain is Glucose-6-phosphate isomerase, found in Haemophilus influenzae (strain ATCC 51907 / DSM 11121 / KW20 / Rd).